The following is a 403-amino-acid chain: Betaine--homocysteine S-methyltransferase 1 (403 aa).

One can recognise a Hcy-binding domain in the interval lysine 8 to leucine 311. Positions 214, 296, and 297 each coordinate Zn(2+).

In terms of assembly, homotetramer. Zn(2+) is required as a cofactor.

The protein resides in the cytoplasm. The catalysed reaction is L-homocysteine + glycine betaine = N,N-dimethylglycine + L-methionine. The protein operates within amine and polyamine degradation; betaine degradation; sarcosine from betaine: step 1/2. It functions in the pathway amino-acid biosynthesis; L-methionine biosynthesis via de novo pathway; L-methionine from L-homocysteine (BhmT route): step 1/1. In terms of biological role, involved in the regulation of homocysteine metabolism. Converts betaine and homocysteine to dimethylglycine and methionine, respectively. This reaction is also required for the irreversible oxidation of choline. This Xenopus tropicalis (Western clawed frog) protein is Betaine--homocysteine S-methyltransferase 1 (bhmt).